The following is a 345-amino-acid chain: Annexin A9 (345 aa).

Annexin repeat units lie at residues 41 to 112 (FSVD…ALLQ), 113 to 184 (PTAQ…ALAK), 197 to 266 (NLAE…GLAS), and 270 to 341 (NTPL…ALCR).

It belongs to the annexin family. Homodimer. As to expression, expressed in the stratified squamous skin epithelium, but not in epithelia of other types (at protein level).

Its function is as follows. Low affinity receptor for acetylcholine known to be targeted by disease-causing pemphigus vulgaris antibodies in keratinocytes. This chain is Annexin A9 (ANXA9), found in Homo sapiens (Human).